The following is a 159-amino-acid chain: uncharacterized protein (159 aa).

Helical transmembrane passes span 59–79 and 91–113; these read IGALAAMLAVLSFALGCALVY and VFSVLSGLLYGGGAVLWGLRRVC.

It is found in the cell membrane. This is an uncharacterized protein from Treponema pallidum (strain Nichols).